A 103-amino-acid chain; its full sequence is Histone H4 (103 aa).

A compositionally biased stretch (gly residues) spans 1-14 (MTGRGKGGKGLGKG). Positions 1 to 20 (MTGRGKGGKGLGKGGAKRHR) are disordered. Lys6 and Lys13 each carry N6-acetyl-N6-methyllysine; alternate. The DNA-binding element occupies 17-21 (KRHRK).

The protein belongs to the histone H4 family. In terms of assembly, the nucleosome is a histone octamer containing two molecules each of H2A, H2B, H3 and H4 assembled in one H3-H4 heterotetramer and two H2A-H2B heterodimers. The octamer wraps approximately 147 bp of DNA.

It is found in the nucleus. It localises to the chromosome. Its function is as follows. Core component of nucleosome. Nucleosomes wrap and compact DNA into chromatin, limiting DNA accessibility to the cellular machineries which require DNA as a template. Histones thereby play a central role in transcription regulation, DNA repair, DNA replication and chromosomal stability. DNA accessibility is regulated via a complex set of post-translational modifications of histones, also called histone code, and nucleosome remodeling. In Myrmica ruginodis (Red ant), this protein is Histone H4 (His4).